A 460-amino-acid chain; its full sequence is Ribosomal protein uS12 methylthiotransferase RimO (460 aa).

The MTTase N-terminal domain occupies 18 to 134 (MKIHITSLGC…VTSIVAEVLR (117 aa)). The [4Fe-4S] cluster site is built by cysteine 27, cysteine 63, cysteine 97, cysteine 171, cysteine 175, and cysteine 178. Residues 157 to 387 (STPFHYAYVK…MVLQQEISLS (231 aa)) form the Radical SAM core domain. In terms of domain architecture, TRAM spans 390-456 (QEWIGKTLEV…HYDLMGEAID (67 aa)).

Belongs to the methylthiotransferase family. RimO subfamily. It depends on [4Fe-4S] cluster as a cofactor.

It is found in the cytoplasm. The catalysed reaction is L-aspartate(89)-[ribosomal protein uS12]-hydrogen + (sulfur carrier)-SH + AH2 + 2 S-adenosyl-L-methionine = 3-methylsulfanyl-L-aspartate(89)-[ribosomal protein uS12]-hydrogen + (sulfur carrier)-H + 5'-deoxyadenosine + L-methionine + A + S-adenosyl-L-homocysteine + 2 H(+). In terms of biological role, catalyzes the methylthiolation of an aspartic acid residue of ribosomal protein uS12. The sequence is that of Ribosomal protein uS12 methylthiotransferase RimO from Heliobacterium modesticaldum (strain ATCC 51547 / Ice1).